The following is a 627-amino-acid chain: (-)-beta-pinene synthase 1, chloroplastic (627 aa).

Residues 1–50 (MDLISVLPSTSKSCVCLHKPLSSSTHKLKPFCRTIRILGMPRPRKSVLMA) constitute a chloroplast transit peptide. Residues Asp378, Asp382, and Asp530 each coordinate Mg(2+). A DDXXD motif motif is present at residues 378–382 (DDMYD).

This sequence belongs to the terpene synthase family. Tpsd subfamily. Mg(2+) is required as a cofactor. Mn(2+) serves as cofactor.

The protein localises to the plastid. It is found in the chloroplast. The enzyme catalyses (2E)-geranyl diphosphate = (1S,5S)-beta-pinene + diphosphate. It catalyses the reaction (2E)-geranyl diphosphate = (1S,5S)-alpha-pinene + diphosphate. It functions in the pathway terpene metabolism; oleoresin biosynthesis. The protein operates within secondary metabolite biosynthesis; terpenoid biosynthesis. Monoterpene synthase (TPS) involved in the biosynthesis of monoterpene natural products included in conifer oleoresin secretions and volatile emissions; these compounds contribute to biotic and abiotic stress defense against herbivores and pathogens. Catalyzes the conversion of (2E)-geranyl diphosphate (GPP) to (-)-beta-pinene and, to a lower extent, to (-)-alpha-pinene. This chain is (-)-beta-pinene synthase 1, chloroplastic, found in Pinus contorta (Shore pine).